Consider the following 168-residue polypeptide: Transcription antitermination protein NusB (168 aa).

It belongs to the NusB family.

Its function is as follows. Involved in transcription antitermination. Required for transcription of ribosomal RNA (rRNA) genes. Binds specifically to the boxA antiterminator sequence of the ribosomal RNA (rrn) operons. The sequence is that of Transcription antitermination protein NusB from Brucella anthropi (strain ATCC 49188 / DSM 6882 / CCUG 24695 / JCM 21032 / LMG 3331 / NBRC 15819 / NCTC 12168 / Alc 37) (Ochrobactrum anthropi).